The chain runs to 419 residues: S-adenosylmethionine synthase (419 aa).

Position 15 (His15) interacts with ATP. Residue Asp17 participates in Mg(2+) binding. Glu43 contributes to the K(+) binding site. The L-methionine site is built by Glu56 and Gln99. The flexible loop stretch occupies residues 99-109 (QSPEIAQGVSC). Residues 173–175 (DGK), 253–254 (RF), Asp262, 268–269 (RK), Ala285, and Lys289 each bind ATP. An L-methionine-binding site is contributed by Asp262. Lys293 lines the L-methionine pocket.

The protein belongs to the AdoMet synthase family. In terms of assembly, homotetramer; dimer of dimers. Requires Mg(2+) as cofactor. It depends on K(+) as a cofactor.

The protein resides in the cytoplasm. It catalyses the reaction L-methionine + ATP + H2O = S-adenosyl-L-methionine + phosphate + diphosphate. The protein operates within amino-acid biosynthesis; S-adenosyl-L-methionine biosynthesis; S-adenosyl-L-methionine from L-methionine: step 1/1. Catalyzes the formation of S-adenosylmethionine (AdoMet) from methionine and ATP. The overall synthetic reaction is composed of two sequential steps, AdoMet formation and the subsequent tripolyphosphate hydrolysis which occurs prior to release of AdoMet from the enzyme. The sequence is that of S-adenosylmethionine synthase from Gloeobacter violaceus (strain ATCC 29082 / PCC 7421).